The primary structure comprises 331 residues: UDP-GalNAc:beta-1,3-N-acetylgalactosaminyltransferase 1 (331 aa).

The Cytoplasmic segment spans residues 1 to 20; it reads MASALWTVLPSRMSLRSLKW. Residues 21 to 43 traverse the membrane as a helical; Signal-anchor for type II membrane protein segment; sequence SLLLLSLLSFFVMWYLSLPHYNV. Topologically, residues 44–331 are lumenal; the sequence is IERVNWMYFY…VMLRNTTCHY (288 aa). N-linked (GlcNAc...) asparagine glycosylation is found at N72, N154, N198, N212, and N326.

Belongs to the glycosyltransferase 31 family. Mg(2+) serves as cofactor. In terms of tissue distribution, higher expression in heart and brain, and to a lesser extent in lung, placenta, kidney and testis. Lower expression in liver, spleen and stomach. No expression in skeletal muscle.

The protein localises to the golgi apparatus membrane. The enzyme catalyses a globoside Gb3Cer (d18:1(4E)) + UDP-N-acetyl-alpha-D-galactosamine = a globoside Gb4Cer (d18:1(4E)) + UDP + H(+). It participates in protein modification; protein glycosylation. Transfers N-acetylgalactosamine onto globotriaosylceramide. Plays a critical role in preimplantation stage embryonic development. This is UDP-GalNAc:beta-1,3-N-acetylgalactosaminyltransferase 1 from Homo sapiens (Human).